A 98-amino-acid polypeptide reads, in one-letter code: Large ribosomal subunit protein uL23 (98 aa).

It belongs to the universal ribosomal protein uL23 family. Part of the 50S ribosomal subunit. Contacts protein L29, and trigger factor when it is bound to the ribosome.

In terms of biological role, one of the early assembly proteins it binds 23S rRNA. One of the proteins that surrounds the polypeptide exit tunnel on the outside of the ribosome. Forms the main docking site for trigger factor binding to the ribosome. The chain is Large ribosomal subunit protein uL23 from Limosilactobacillus reuteri (strain DSM 20016) (Lactobacillus reuteri).